The sequence spans 150 residues: MNNKVGLAHSLRDGQKYMDTWPMRKELSAIFPEQRIIKATRFGIKVMPAIAAISVLTQMAFNNYQALPQAIVMALFALSLPLQGMWWLGHRSNTQLPPALATWYRELHQKIVESGSALEPLKSRPRYKELAHTLNRAFRHLDKSALERWF.

The next 2 membrane-spanning stretches (helical) occupy residues 42–62 (FGIK…MAFN) and 70–90 (AIVM…WLGH).

This sequence belongs to the UPF0208 family.

Its subcellular location is the cell inner membrane. The polypeptide is UPF0208 membrane protein VV1_2222 (Vibrio vulnificus (strain CMCP6)).